The sequence spans 322 residues: UV DNA damage endonuclease (322 aa).

This sequence belongs to the uve1/UvsE family.

Component in a DNA repair pathway. Removal of UV LIGHT damaged nucleotides. Recognizes pyrimidine dimers and cleave a phosphodiester bond immediately 5' to the lesion. The sequence is that of UV DNA damage endonuclease from Nostoc sp. (strain PCC 7120 / SAG 25.82 / UTEX 2576).